The sequence spans 393 residues: 4-hydroxyphenylpyruvate dioxygenase (393 aa).

Thr2 is subject to N-acetylthreonine. 2 consecutive VOC domains span residues 18–152 (HFHS…KMTF) and 180–338 (IIDH…IFTK). His183 lines the Fe cation pocket. Phosphoserine occurs at positions 211, 226, and 250. 2 residues coordinate Fe cation: His266 and Glu349.

This sequence belongs to the 4HPPD family. Homodimer. The cofactor is Fe cation. As to expression, liver.

It is found in the cytoplasm. Its subcellular location is the endoplasmic reticulum membrane. The protein localises to the golgi apparatus membrane. It carries out the reaction 3-(4-hydroxyphenyl)pyruvate + O2 = homogentisate + CO2. The protein operates within amino-acid degradation; L-phenylalanine degradation; acetoacetate and fumarate from L-phenylalanine: step 3/6. In terms of biological role, catalyzes the conversion of 4-hydroxyphenylpyruvic acid to homogentisic acid, one of the steps in tyrosine catabolism. The protein is 4-hydroxyphenylpyruvate dioxygenase (HPD) of Sus scrofa (Pig).